The primary structure comprises 243 residues: Adenylate dimethylallyltransferase (243 aa).

It carries out the reaction dimethylallyl diphosphate + AMP = N(6)-(dimethylallyl)adenosine 5'-phosphate + diphosphate. Its function is as follows. Transfers dimethylallyl groups to AMP as part of the biosynthesis of cytokinin phytohormones. This chain is Adenylate dimethylallyltransferase (tzs), found in Agrobacterium tumefaciens (strain T37).